The sequence spans 342 residues: UV excision repair protein RAD23 homolog (342 aa).

The region spanning 1–76 (MKVTIKNINK…IVMMIKKPRE (76 aa)) is the Ubiquitin-like domain. A compositionally biased stretch (low complexity) spans 77–151 (APATTPAPST…TPGSTSTTSP (75 aa)). Residues 77–157 (APATTPAPST…TTSPQQSSDF (81 aa)) form a disordered region. UBA domains are found at residues 161–201 (TELE…LVSG) and 297–338 (QEES…LFET).

The protein belongs to the RAD23 family.

Its subcellular location is the nucleus. It is found in the cytoplasm. May play a role both in proteasomal degradation of misfolded proteins and DNA repair. This is UV excision repair protein RAD23 homolog (rcbA) from Dictyostelium discoideum (Social amoeba).